Consider the following 256-residue polypeptide: Trans-aconitate 2-methyltransferase (256 aa).

Belongs to the methyltransferase superfamily. Tam family.

It localises to the cytoplasm. It catalyses the reaction trans-aconitate + S-adenosyl-L-methionine = (E)-3-(methoxycarbonyl)pent-2-enedioate + S-adenosyl-L-homocysteine. Catalyzes the S-adenosylmethionine monomethyl esterification of trans-aconitate. The sequence is that of Trans-aconitate 2-methyltransferase from Rhodopseudomonas palustris (strain HaA2).